Reading from the N-terminus, the 2149-residue chain is Non-reducing polyketide synthase PvBS090_009107 (2149 aa).

Residues 8–244 (YLFGDQTGEF…VRVPVHAPYH (237 aa)) form an N-terminal acylcarrier protein transacylase domain (SAT) region. The 432-residue stretch at 375–806 (QSKIAIIGLS…GGNTALLIED (432 aa)) folds into the Ketosynthase family 3 (KS3) domain. Active-site for beta-ketoacyl synthase activity residues include cysteine 547, histidine 682, and histidine 724. A malonyl-CoA:ACP transacylase (MAT) domain region spans residues 911–1231 (FVFTGQGAQY…LSAIYLAGVD (321 aa)). Serine 1000 functions as the For acyl/malonyl transferase activity in the catalytic mechanism. The tract at residues 1290–1604 (TTSVQRIVET…RQVLNTVLPP (315 aa)) is product template (PT) domain. The tract at residues 1294-1426 (QRIVETRDEG…CLVKFSDTHL (133 aa)) is N-terminal hotdog fold. The PKS/mFAS DH domain occupies 1294–1599 (QRIVETRDEG…FQGVPRQVLN (306 aa)). Residue histidine 1326 is the Proton acceptor; for dehydratase activity of the active site. Positions 1454–1599 (SHRMHRGMFY…FQGVPRQVLN (146 aa)) are C-terminal hotdog fold. The Proton donor; for dehydratase activity role is filled by aspartate 1512. A disordered region spans residues 1604–1631 (PAGGSKAAPRTTARAVPPPPINVEKPKS). A Carrier 1 domain is found at 1649 to 1726 (SAGPSVLVQA…DLKQLLSQAS (78 aa)). Serine 1686 is subject to O-(pantetheine 4'-phosphoryl)serine. 2 stretches are compositionally biased toward low complexity: residues 1722-1731 (LSQASPSDSS) and 1744-1755 (SSSTEPSTPGTP). Residues 1722-1763 (LSQASPSDSSDSSEESHYSFRDSSSTEPSTPGTPAFFSPKRG) are disordered. Residues 1769–1846 (VGESETIKTI…AVETALDLKP (78 aa)) enclose the Carrier 2 domain. At serine 1806 the chain carries O-(pantetheine 4'-phosphoryl)serine. Positions 1875-2147 (STHPPATSIL…KLSAFIGRAM (273 aa)) are thioesterase (TE) domain. The active-site For thioesterase activity is serine 1965.

It catalyses the reaction 6 malonyl-CoA + acetyl-CoA + 6 H(+) = naphtopyrone YWA1 + 6 CO2 + 7 CoA + H2O. The protein operates within secondary metabolite biosynthesis. It functions in the pathway pigment biosynthesis. Functionally, non-reducing polyketide synthase; part of the gene cluster 24 that mediates the biosynthesis of a pigment with an aromatic structure protecting the pigmented fungus from both ionizing and non-ionizing radiations based on a mechanism similar to melanin, that is, free radical quenching and spherical spatial arrangement. Catalyzes the biosynthesis of the gamma-naphthopyrone precursor YWA1, via condensation of one acetyl-CoA starter unit with 6 malonyl-CoA units. YWA1 is probably further processed by the additional enzymes present within the cluster 24, however these additional steps have not been characterized yet. YWA1 is not converted to DHN-melanin in Byssochlamys spectabilis since the use of the DHN-melanin pathway inhibitor pyroquilon does not result in a loss of pigmentation. The protein is Non-reducing polyketide synthase PvBS090_009107 of Byssochlamys spectabilis (Paecilomyces variotii).